The following is a 245-amino-acid chain: 1-(5-phosphoribosyl)-5-[(5-phosphoribosylamino)methylideneamino] imidazole-4-carboxamide isomerase (245 aa).

D8 acts as the Proton acceptor in catalysis. Catalysis depends on D131, which acts as the Proton donor.

The protein belongs to the HisA/HisF family.

It localises to the cytoplasm. The catalysed reaction is 1-(5-phospho-beta-D-ribosyl)-5-[(5-phospho-beta-D-ribosylamino)methylideneamino]imidazole-4-carboxamide = 5-[(5-phospho-1-deoxy-D-ribulos-1-ylimino)methylamino]-1-(5-phospho-beta-D-ribosyl)imidazole-4-carboxamide. It functions in the pathway amino-acid biosynthesis; L-histidine biosynthesis; L-histidine from 5-phospho-alpha-D-ribose 1-diphosphate: step 4/9. The sequence is that of 1-(5-phosphoribosyl)-5-[(5-phosphoribosylamino)methylideneamino] imidazole-4-carboxamide isomerase from Verminephrobacter eiseniae (strain EF01-2).